The following is an 82-amino-acid chain: DNA-directed RNA polymerase subunit Rpo5 (82 aa).

The protein belongs to the archaeal Rpo5/eukaryotic RPB5 RNA polymerase subunit family. Part of the RNA polymerase complex.

The protein resides in the cytoplasm. It carries out the reaction RNA(n) + a ribonucleoside 5'-triphosphate = RNA(n+1) + diphosphate. In terms of biological role, DNA-dependent RNA polymerase (RNAP) catalyzes the transcription of DNA into RNA using the four ribonucleoside triphosphates as substrates. The protein is DNA-directed RNA polymerase subunit Rpo5 of Pyrococcus horikoshii (strain ATCC 700860 / DSM 12428 / JCM 9974 / NBRC 100139 / OT-3).